A 342-amino-acid polypeptide reads, in one-letter code: Succinylglutamate desuccinylase (342 aa).

Residues His63, Glu66, and His155 each contribute to the Zn(2+) site. The active site involves Glu219.

It belongs to the AspA/AstE family. Succinylglutamate desuccinylase subfamily. It depends on Zn(2+) as a cofactor.

It carries out the reaction N-succinyl-L-glutamate + H2O = L-glutamate + succinate. It participates in amino-acid degradation; L-arginine degradation via AST pathway; L-glutamate and succinate from L-arginine: step 5/5. Transforms N(2)-succinylglutamate into succinate and glutamate. The sequence is that of Succinylglutamate desuccinylase from Vibrio vulnificus (strain YJ016).